We begin with the raw amino-acid sequence, 267 residues long: Matrilysin (267 aa).

The N-terminal stretch at 1–17 (MRLTVLCAVCLLPGSLA) is a signal peptide. The propeptide at 18 to 94 (LPLPQEAGGM…PRCGVPDVAE (77 aa)) is activation peptide. The short motif at 85–92 (PRCGVPDV) is the Cysteine switch element. Cys87 contacts Zn(2+). Asp153 serves as a coordination point for Ca(2+). Residues His163 and Asp165 each contribute to the Zn(2+) site. Ca(2+) contacts are provided by Asp170, Gly171, Gly173, and Thr175. Residue His178 coordinates Zn(2+). The Ca(2+) site is built by Gly185, Gly187, and Asp189. Residue His191 coordinates Zn(2+). Asp193 and Glu196 together coordinate Ca(2+). Residue His214 participates in Zn(2+) binding. Residue Glu215 is part of the active site. Zn(2+) contacts are provided by His218 and His224.

It belongs to the peptidase M10A family. Ca(2+) serves as cofactor. The cofactor is Zn(2+).

It is found in the secreted. The protein localises to the extracellular space. The protein resides in the extracellular matrix. It carries out the reaction Cleavage of 14-Ala-|-Leu-15 and 16-Tyr-|-Leu-17 in B chain of insulin. No action on collagen types I, II, IV, V. Cleaves gelatin chain alpha2(I) &gt; alpha1(I).. Degrades casein, gelatins of types I, III, IV, and V, and fibronectin. Activates procollagenase. This is Matrilysin (MMP7) from Homo sapiens (Human).